The primary structure comprises 84 residues: Kappa-conotoxin-like Im11.3 (84 aa).

An N-terminal signal peptide occupies residues 1–26; that stretch reads MMFRLTSVSCFLLVIACLNLFQVVLT. 4 disulfide bridges follow: C29–C43, C36–C48, C42–C51, and C47–C64. Positions 71–84 are excised as a propeptide; that stretch reads LRPSHPLFLLLPAR.

This sequence belongs to the conotoxin I2 superfamily. Expressed by the venom duct.

The protein resides in the secreted. In terms of biological role, inhibits the vertebrate voltage-gated potassium channels Kv1.1/KCNA1 and Kv1.3/KCNA3. The sequence is that of Kappa-conotoxin-like Im11.3 from Conus imperialis (Imperial cone).